We begin with the raw amino-acid sequence, 217 residues long: Uracil-DNA glycosylase (217 aa).

Catalysis depends on aspartate 62, which acts as the Proton acceptor.

Belongs to the uracil-DNA glycosylase (UDG) superfamily. UNG family.

It localises to the cytoplasm. The enzyme catalyses Hydrolyzes single-stranded DNA or mismatched double-stranded DNA and polynucleotides, releasing free uracil.. Excises uracil residues from the DNA which can arise as a result of misincorporation of dUMP residues by DNA polymerase or due to deamination of cytosine. This Streptococcus pneumoniae (strain JJA) protein is Uracil-DNA glycosylase.